A 225-amino-acid polypeptide reads, in one-letter code: Cytidylate kinase (225 aa).

10-18 (GPASSGKST) is a binding site for ATP.

This sequence belongs to the cytidylate kinase family. Type 1 subfamily.

The protein resides in the cytoplasm. It catalyses the reaction CMP + ATP = CDP + ADP. The enzyme catalyses dCMP + ATP = dCDP + ADP. The protein is Cytidylate kinase of Streptococcus suis (strain 98HAH33).